Consider the following 299-residue polypeptide: tRNA uridine(34) hydroxylase (299 aa).

Residues 132–226 form the Rhodanese domain; that stretch reads AGRPVVMLDT…YFEEVGGAHY (95 aa). Residue Cys186 is the Cysteine persulfide intermediate of the active site.

Belongs to the TrhO family.

It carries out the reaction uridine(34) in tRNA + AH2 + O2 = 5-hydroxyuridine(34) in tRNA + A + H2O. Its function is as follows. Catalyzes oxygen-dependent 5-hydroxyuridine (ho5U) modification at position 34 in tRNAs. In Burkholderia pseudomallei (strain 1106a), this protein is tRNA uridine(34) hydroxylase.